The following is a 677-amino-acid chain: Sulfate transporter 2.1 (677 aa).

The Cytoplasmic segment spans residues Met-1–Asp-118. The segment at Ser-23–Leu-54 is disordered. The segment covering Gln-28–Gln-44 has biased composition (low complexity). A helical membrane pass occupies residues Leu-119–Leu-139. Over Ala-140–Lys-141 the chain is Extracellular. The helical transmembrane segment at Leu-142–Gly-162 threads the bilayer. The Cytoplasmic segment spans residues Thr-163–Glu-166. Residues Ile-167–Ile-187 form a helical membrane-spanning segment. Over Asp-188–Lys-198 the chain is Extracellular. Residues Leu-199–Leu-219 form a helical membrane-spanning segment. Residues Gly-220–Phe-221 lie on the Cytoplasmic side of the membrane. A helical transmembrane segment spans residues Leu-222–Ile-242. The Extracellular portion of the chain corresponds to Gly-243–Ser-278. An N-linked (GlcNAc...) asparagine glycan is attached at Asn-255. A helical transmembrane segment spans residues Pro-279 to Gly-299. At Lys-300 to Lys-304 the chain is on the cytoplasmic side. Residues Leu-305–Phe-325 form a helical membrane-spanning segment. At Leu-326–Gly-360 the chain is on the extracellular side. A helical membrane pass occupies residues Gln-361–Gly-381. The Cytoplasmic portion of the chain corresponds to Arg-382–Glu-397. The helical transmembrane segment at Met-398–Gly-418 threads the bilayer. The Extracellular segment spans residues Ser-419–Asn-426. The helical transmembrane segment at Phe-427–Ala-447 threads the bilayer. At Leu-448–Leu-454 the chain is on the cytoplasmic side. A helical transmembrane segment spans residues Leu-455–Ile-475. Over Asn-476–Asp-490 the chain is Extracellular. The helical transmembrane segment at Phe-491–Leu-511 threads the bilayer. Over Val-512–Val-677 the chain is Cytoplasmic. The STAS domain occupies Tyr-548–Cys-672.

Belongs to the SLC26A/SulP transporter (TC 2.A.53) family. In terms of tissue distribution, expressed in root cap, central cylinder of roots and in vascular tissues of leaves.

The protein resides in the membrane. Its function is as follows. Low-affinity H(+)/sulfate cotransporter that may be involved in root-to-shoot translocation of sulfate. Plays a central role in the regulation of sulfate assimilation. The protein is Sulfate transporter 2.1 (SULTR2;1) of Arabidopsis thaliana (Mouse-ear cress).